A 366-amino-acid polypeptide reads, in one-letter code: 1-deoxy-D-xylulose 5-phosphate reductoisomerase (366 aa).

The NADPH site is built by threonine 7, glycine 8, serine 9, isoleucine 10, glycine 31, asparagine 33, and asparagine 111. Lysine 112 contributes to the 1-deoxy-D-xylulose 5-phosphate binding site. Position 113 (glutamate 113) interacts with NADPH. A Mn(2+)-binding site is contributed by aspartate 131. 1-deoxy-D-xylulose 5-phosphate contacts are provided by serine 132, glutamate 133, serine 162, and histidine 185. Mn(2+) is bound at residue glutamate 133. Residue glycine 191 coordinates NADPH. Positions 198, 203, 204, and 207 each coordinate 1-deoxy-D-xylulose 5-phosphate. Glutamate 207 serves as a coordination point for Mn(2+).

This sequence belongs to the DXR family. Mg(2+) serves as cofactor. The cofactor is Mn(2+).

It carries out the reaction 2-C-methyl-D-erythritol 4-phosphate + NADP(+) = 1-deoxy-D-xylulose 5-phosphate + NADPH + H(+). Its pathway is isoprenoid biosynthesis; isopentenyl diphosphate biosynthesis via DXP pathway; isopentenyl diphosphate from 1-deoxy-D-xylulose 5-phosphate: step 1/6. Catalyzes the NADPH-dependent rearrangement and reduction of 1-deoxy-D-xylulose-5-phosphate (DXP) to 2-C-methyl-D-erythritol 4-phosphate (MEP). This Nautilia profundicola (strain ATCC BAA-1463 / DSM 18972 / AmH) protein is 1-deoxy-D-xylulose 5-phosphate reductoisomerase.